A 739-amino-acid polypeptide reads, in one-letter code: Probable beta-glucosidase L (739 aa).

Positions 1–17 (MQTLFLSLLAAAVTVHA) are cleaved as a signal peptide. Residues N40 and N224 are each glycosylated (N-linked (GlcNAc...) asparagine). D252 is an active-site residue. Residue N398 is glycosylated (N-linked (GlcNAc...) asparagine).

Belongs to the glycosyl hydrolase 3 family.

Its subcellular location is the secreted. It catalyses the reaction Hydrolysis of terminal, non-reducing beta-D-glucosyl residues with release of beta-D-glucose.. It participates in glycan metabolism; cellulose degradation. In terms of biological role, beta-glucosidases are one of a number of cellulolytic enzymes involved in the degradation of cellulosic biomass. Catalyzes the last step releasing glucose from the inhibitory cellobiose. In Aspergillus fumigatus (strain CBS 144.89 / FGSC A1163 / CEA10) (Neosartorya fumigata), this protein is Probable beta-glucosidase L (bglL).